We begin with the raw amino-acid sequence, 110 residues long: Cell cycle protein GpsB (110 aa).

The stretch at 37 to 63 forms a coiled coil; it reads KDYTVYIALVKELQEENAKLKAKATSA. A disordered region spans residues 59 to 79; the sequence is KATSAPASRPAYASATSEPSH. Residues 60 to 75 show a composition bias toward low complexity; sequence ATSAPASRPAYASATS.

This sequence belongs to the GpsB family. As to quaternary structure, forms polymers through the coiled coil domains. Interacts with PBP1, MreC and EzrA.

The protein localises to the cytoplasm. Divisome component that associates with the complex late in its assembly, after the Z-ring is formed, and is dependent on DivIC and PBP2B for its recruitment to the divisome. Together with EzrA, is a key component of the system that regulates PBP1 localization during cell cycle progression. Its main role could be the removal of PBP1 from the cell pole after pole maturation is completed. Also contributes to the recruitment of PBP1 to the division complex. Not essential for septum formation. This chain is Cell cycle protein GpsB, found in Streptococcus thermophilus (strain CNRZ 1066).